Consider the following 193-residue polypeptide: Imidazoleglycerol-phosphate dehydratase (193 aa).

The protein belongs to the imidazoleglycerol-phosphate dehydratase family.

Its subcellular location is the cytoplasm. The enzyme catalyses D-erythro-1-(imidazol-4-yl)glycerol 3-phosphate = 3-(imidazol-4-yl)-2-oxopropyl phosphate + H2O. It participates in amino-acid biosynthesis; L-histidine biosynthesis; L-histidine from 5-phospho-alpha-D-ribose 1-diphosphate: step 6/9. In Methanospirillum hungatei JF-1 (strain ATCC 27890 / DSM 864 / NBRC 100397 / JF-1), this protein is Imidazoleglycerol-phosphate dehydratase.